Reading from the N-terminus, the 237-residue chain is Probable transcriptional regulatory protein Exig_1693 (237 aa).

Belongs to the TACO1 family. YeeN subfamily.

The protein localises to the cytoplasm. The protein is Probable transcriptional regulatory protein Exig_1693 of Exiguobacterium sibiricum (strain DSM 17290 / CCUG 55495 / CIP 109462 / JCM 13490 / 255-15).